A 692-amino-acid chain; its full sequence is Paramyosin (692 aa).

Residues 1-15 are nonhelical region; sequence MNKKRDSELAKLRKL. The stretch at 16 to 692 forms a coiled coil; it reads LEDVHIESEE…DHRVKELLLQ (677 aa). The interval 26–57 is disordered; it reads TAHHLRQKHQAAIQEMQDQLDQLQKAKNKSDK.

This sequence belongs to the paramyosin family. As to quaternary structure, homodimer.

The protein resides in the cytoplasm. Its subcellular location is the myofibril. Functionally, paramyosin is a major structural component of many thick filaments isolated from invertebrate muscles. The polypeptide is Paramyosin (Dermatophagoides farinae (American house dust mite)).